Consider the following 198-residue polypeptide: Putative glutathione S-transferase alpha-2 (198 aa).

Serine 2 is modified (N-acetylserine). Residues 5 to 81 (SVPSLTYFQG…YIAKKHNFMG (77 aa)) enclose the GST N-terminal domain. Glutathione-binding positions include tyrosine 11, arginine 45, 52–53 (QL), and 65–66 (QS). The region spanning 83-198 (NLEEEFLVDQ…YIKERPETKF (116 aa)) is the GST C-terminal domain.

Belongs to the GST superfamily. Alpha family.

The enzyme catalyses RX + glutathione = an S-substituted glutathione + a halide anion + H(+). In terms of biological role, conjugation of reduced glutathione to a wide number of exogenous and endogenous hydrophobic electrophiles. The protein is Putative glutathione S-transferase alpha-2 (gsta2-1) of Dictyostelium discoideum (Social amoeba).